The following is a 64-amino-acid chain: MKLIIYVKEGESIDRVLKKWKQKFDKARIIRKLRERQQYIKPSERKRKILTKAKYREFLISKNS.

Belongs to the bacterial ribosomal protein bS21 family.

This is Small ribosomal subunit protein bS21 from Karelsulcia muelleri (strain GWSS) (Sulcia muelleri).